A 265-amino-acid polypeptide reads, in one-letter code: Shikimate dehydrogenase (NADP(+)) (265 aa).

Shikimate-binding positions include 15–17 (SLS) and threonine 62. The Proton acceptor role is filled by lysine 66. Residue glutamate 78 participates in NADP(+) binding. Positions 87 and 102 each coordinate shikimate. NADP(+) contacts are provided by residues 126–130 (GAGGV), 150–155 (NRTELK), and valine 210. Position 212 (tyrosine 212) interacts with shikimate. Glycine 233 lines the NADP(+) pocket.

The protein belongs to the shikimate dehydrogenase family. Homodimer.

The enzyme catalyses shikimate + NADP(+) = 3-dehydroshikimate + NADPH + H(+). Its pathway is metabolic intermediate biosynthesis; chorismate biosynthesis; chorismate from D-erythrose 4-phosphate and phosphoenolpyruvate: step 4/7. Involved in the biosynthesis of the chorismate, which leads to the biosynthesis of aromatic amino acids. Catalyzes the reversible NADPH linked reduction of 3-dehydroshikimate (DHSA) to yield shikimate (SA). The sequence is that of Shikimate dehydrogenase (NADP(+)) from Pelagibacter ubique (strain HTCC1062).